Reading from the N-terminus, the 125-residue chain is NADH-ubiquinone oxidoreductase chain 1 (125 aa).

The next 3 helical transmembrane spans lie at 5–25, 74–94, and 105–125; these read IFAF…VAFL, YLFF…WNFM, and LSLL…LGSG.

It belongs to the complex I subunit 1 family.

The protein resides in the mitochondrion inner membrane. It carries out the reaction a ubiquinone + NADH + 5 H(+)(in) = a ubiquinol + NAD(+) + 4 H(+)(out). Functionally, core subunit of the mitochondrial membrane respiratory chain NADH dehydrogenase (Complex I) that is believed to belong to the minimal assembly required for catalysis. Complex I functions in the transfer of electrons from NADH to the respiratory chain. The immediate electron acceptor for the enzyme is believed to be ubiquinone. This is NADH-ubiquinone oxidoreductase chain 1 (ND1) from Arbacia lixula (Black urchin).